The primary structure comprises 258 residues: Imidazole glycerol phosphate synthase subunit HisF (258 aa).

Active-site residues include Asp11 and Asp130.

The protein belongs to the HisA/HisF family. In terms of assembly, heterodimer of HisH and HisF.

The protein resides in the cytoplasm. The catalysed reaction is 5-[(5-phospho-1-deoxy-D-ribulos-1-ylimino)methylamino]-1-(5-phospho-beta-D-ribosyl)imidazole-4-carboxamide + L-glutamine = D-erythro-1-(imidazol-4-yl)glycerol 3-phosphate + 5-amino-1-(5-phospho-beta-D-ribosyl)imidazole-4-carboxamide + L-glutamate + H(+). Its pathway is amino-acid biosynthesis; L-histidine biosynthesis; L-histidine from 5-phospho-alpha-D-ribose 1-diphosphate: step 5/9. IGPS catalyzes the conversion of PRFAR and glutamine to IGP, AICAR and glutamate. The HisF subunit catalyzes the cyclization activity that produces IGP and AICAR from PRFAR using the ammonia provided by the HisH subunit. This chain is Imidazole glycerol phosphate synthase subunit HisF, found in Citrobacter koseri (strain ATCC BAA-895 / CDC 4225-83 / SGSC4696).